The following is a 206-amino-acid chain: MAAAVLGQLGALWIHNLRSRGRLAWGVLPQSYVHTSASLDISRKWEKKNKIVYPPQLPGEPRRPAEIYHCRRQIKYSKDKMWYLAKLIRGMSIDQALAQLEFNDKKGAKIIKEVLLEAQDMAVRDHNVEFRSNLYIAESTSGRGQYLKRIRYHGRGRFGIMERVYCHYFVKLVEGPPPPPEPPKMAVAHAKEYIQQLRSRTIIHTL.

Residues 1 to 40 (MAAAVLGQLGALWIHNLRSRGRLAWGVLPQSYVHTSASLD) constitute a mitochondrion transit peptide.

The protein belongs to the universal ribosomal protein uL22 family. As to quaternary structure, component of the mitochondrial ribosome large subunit (39S) which comprises a 16S rRNA and about 50 distinct proteins.

Its subcellular location is the mitochondrion. The protein is Large ribosomal subunit protein uL22m (MRPL22) of Pongo abelii (Sumatran orangutan).